The sequence spans 611 residues: Probable methyltransferase PMT19 (611 aa).

Over 1–15 the chain is Cytoplasmic; sequence MNPSQQHLPKLCPKR. A helical; Signal-anchor for type II membrane protein transmembrane segment spans residues 16–36; sequence LFLFFTPFLLFSLYYILTTIK. The Lumenal portion of the chain corresponds to 37–611; the sequence is TITISSQDRH…TILIVDNSIK (575 aa). N-linked (GlcNAc...) asparagine glycans are attached at residues asparagine 68, asparagine 97, asparagine 289, asparagine 408, asparagine 411, and asparagine 587.

It belongs to the methyltransferase superfamily.

Its subcellular location is the endoplasmic reticulum membrane. The polypeptide is Probable methyltransferase PMT19 (Arabidopsis thaliana (Mouse-ear cress)).